The chain runs to 61 residues: Sperm protamine P1 (61 aa).

Residues 1–61 are disordered; that stretch reads MARFRRSRSR…RSSRRSRRRN (61 aa).

The protein belongs to the protamine P1 family. As to expression, testis.

The protein localises to the nucleus. It is found in the chromosome. Its function is as follows. Protamines substitute for histones in the chromatin of sperm during the haploid phase of spermatogenesis. They compact sperm DNA into a highly condensed, stable and inactive complex. The polypeptide is Sperm protamine P1 (PRM1) (Ornithorhynchus anatinus (Duckbill platypus)).